Consider the following 164-residue polypeptide: UPF0304 protein YfbU (164 aa).

It belongs to the UPF0304 family.

In Escherichia coli O139:H28 (strain E24377A / ETEC), this protein is UPF0304 protein YfbU.